Reading from the N-terminus, the 236-residue chain is Phosphoribosylaminoimidazole-succinocarboxamide synthase (236 aa).

Belongs to the SAICAR synthetase family.

It catalyses the reaction 5-amino-1-(5-phospho-D-ribosyl)imidazole-4-carboxylate + L-aspartate + ATP = (2S)-2-[5-amino-1-(5-phospho-beta-D-ribosyl)imidazole-4-carboxamido]succinate + ADP + phosphate + 2 H(+). It participates in purine metabolism; IMP biosynthesis via de novo pathway; 5-amino-1-(5-phospho-D-ribosyl)imidazole-4-carboxamide from 5-amino-1-(5-phospho-D-ribosyl)imidazole-4-carboxylate: step 1/2. The polypeptide is Phosphoribosylaminoimidazole-succinocarboxamide synthase (Pseudomonas putida (strain ATCC 700007 / DSM 6899 / JCM 31910 / BCRC 17059 / LMG 24140 / F1)).